Consider the following 470-residue polypeptide: Acetyl-CoA decarbonylase/synthase complex subunit beta 2 (470 aa).

[Ni-Fe-S] cluster-binding residues include C190, C193, C279, and C281.

This sequence belongs to the CdhC family. In terms of assembly, monomer. The ACDS complex is made up of alpha, epsilon, beta, gamma and delta chains with a probable stoichiometry of (alpha(2)epsilon(2))(4)-beta(8)-(gamma(1)delta(1))(8) (Potential). [Ni-Fe-S] cluster is required as a cofactor.

It carries out the reaction Co(I)-[corrinoid Fe-S protein] + acetyl-CoA + H(+) = methyl-Co(III)-[corrinoid Fe-S protein] + CO + CoA. The protein operates within one-carbon metabolism; methanogenesis from acetate. Its function is as follows. Part of a complex that catalyzes the reversible cleavage of acetyl-CoA, allowing growth on acetate as sole source of carbon and energy. The alpha-epsilon complex generates CO from CO(2), while the beta subunit (this protein) combines the CO with CoA and a methyl group to form acetyl-CoA. The methyl group, which is incorporated into acetyl-CoA, is transferred to the beta subunit by a corrinoid iron-sulfur protein (the gamma-delta complex). In Methanosarcina mazei (strain ATCC BAA-159 / DSM 3647 / Goe1 / Go1 / JCM 11833 / OCM 88) (Methanosarcina frisia), this protein is Acetyl-CoA decarbonylase/synthase complex subunit beta 2 (cdhC2).